The primary structure comprises 342 residues: N-acetyl-gamma-glutamyl-phosphate reductase (342 aa).

Cysteine 147 is a catalytic residue.

Belongs to the NAGSA dehydrogenase family. Type 1 subfamily.

It localises to the cytoplasm. The catalysed reaction is N-acetyl-L-glutamate 5-semialdehyde + phosphate + NADP(+) = N-acetyl-L-glutamyl 5-phosphate + NADPH + H(+). The protein operates within amino-acid biosynthesis; L-arginine biosynthesis; N(2)-acetyl-L-ornithine from L-glutamate: step 3/4. In terms of biological role, catalyzes the NADPH-dependent reduction of N-acetyl-5-glutamyl phosphate to yield N-acetyl-L-glutamate 5-semialdehyde. In Campylobacter jejuni subsp. jejuni serotype O:2 (strain ATCC 700819 / NCTC 11168), this protein is N-acetyl-gamma-glutamyl-phosphate reductase.